Reading from the N-terminus, the 458-residue chain is Retinoic acid receptor gamma (458 aa).

The segment at 1 to 89 is modulating; sequence MATNKERLFA…PPPPPRVYKP (89 aa). Arg34 carries the post-translational modification Omega-N-methylarginine. Residues 58 to 83 form a disordered region; that stretch reads MASLSVETQSTSSEEMVPSSPSPPPP. Polar residues predominate over residues 62-71; it reads SVETQSTSSE. NR C4-type zinc fingers lie at residues 90-110 and 126-150; these read CFVC…CEGC and CHRD…LQKC. A DNA-binding region (nuclear receptor) is located at residues 90 to 155; that stretch reads CFVCNDKSSG…RLQKCFEVGM (66 aa). Positions 156–184 are hinge; sequence SKEAVRNDRNKKKKEVKEEGSPDSYELSP. Positions 161 to 180 are disordered; it reads RNDRNKKKKEVKEEGSPDSY. Glycyl lysine isopeptide (Lys-Gly) (interchain with G-Cter in SUMO2) cross-links involve residues Lys172 and Lys401. The NR LBD domain occupies 185-419; that stretch reads QLEELITKVS…PLIREMLENP (235 aa). The interval 409 to 458 is disordered; sequence PPLIREMLENPEMFEDDSSKPGPHPKASSEDEAPGGQGKRGQSPQPDQGP. Positions 448-458 are enriched in polar residues; that stretch reads RGQSPQPDQGP.

This sequence belongs to the nuclear hormone receptor family. NR1 subfamily. Homodimer. Heterodimer with a RXR molecule. Binds DNA preferentially as a RAR/RXR heterodimer. Forms a complex with PUS1 and the SRA1 RNA in the nucleus.

Its subcellular location is the nucleus. The protein resides in the cytoplasm. In terms of biological role, receptor for retinoic acid. Retinoic acid receptors bind as heterodimers to their target response elements in response to their ligands, all-trans or 9-cis retinoic acid, and regulate gene expression in various biological processes. The RAR/RXR heterodimers bind to the retinoic acid response elements (RARE) composed of tandem 5'-AGGTCA-3' sites known as DR1-DR5. In the absence of ligand, acts mainly as an activator of gene expression due to weak binding to corepressors. Required for limb bud development. In concert with RARA or RARB, required for skeletal growth, matrix homeostasis and growth plate function. The polypeptide is Retinoic acid receptor gamma (Rarg) (Mus musculus (Mouse)).